A 143-amino-acid polypeptide reads, in one-letter code: MKSYMAKPNEVERKWYVVDAEGKTLGRLSSEIATILRGKNKPEFTPHVDTGDFVIVVNAEKVALTGKKLDQSFYTYHTGHPGGLRQVSFRRLLAEKPESLVYNAVKGMLPKTRLGRQMLTKLKVYAGPNHKHEAQQPEALELL.

Belongs to the universal ribosomal protein uL13 family. Part of the 50S ribosomal subunit.

Functionally, this protein is one of the early assembly proteins of the 50S ribosomal subunit, although it is not seen to bind rRNA by itself. It is important during the early stages of 50S assembly. In Alkaliphilus oremlandii (strain OhILAs) (Clostridium oremlandii (strain OhILAs)), this protein is Large ribosomal subunit protein uL13.